A 498-amino-acid chain; its full sequence is ATP synthase subunit alpha 1 (498 aa).

164–171 lines the ATP pocket; the sequence is GNRQSGKT.

Belongs to the ATPase alpha/beta chains family. F-type ATPases have 2 components, CF(1) - the catalytic core - and CF(0) - the membrane proton channel. CF(1) has five subunits: alpha(3), beta(3), gamma(1), delta(1), epsilon(1). CF(0) has three main subunits: a(1), b(2) and c(9-12). The alpha and beta chains form an alternating ring which encloses part of the gamma chain. CF(1) is attached to CF(0) by a central stalk formed by the gamma and epsilon chains, while a peripheral stalk is formed by the delta and b chains.

The protein resides in the cell membrane. It carries out the reaction ATP + H2O + 4 H(+)(in) = ADP + phosphate + 5 H(+)(out). Produces ATP from ADP in the presence of a proton gradient across the membrane. The alpha chain is a regulatory subunit. The sequence is that of ATP synthase subunit alpha 1 from Listeria welshimeri serovar 6b (strain ATCC 35897 / DSM 20650 / CCUG 15529 / CIP 8149 / NCTC 11857 / SLCC 5334 / V8).